The primary structure comprises 578 residues: Probable methylcrotonoyl-CoA carboxylase beta chain, mitochondrial (578 aa).

A mitochondrion-targeting transit peptide spans 1-29; that stretch reads MIRLNWLFRSSSVLLRSQVRLLHVGDANV. The region spanning 48 to 305 is the CoA carboxyltransferase N-terminal domain; sequence MASLVGDLRN…SATNSYNDQL (258 aa). The interval 48 to 570 is carboxyltransferase; the sequence is MASLVGDLRN…KAALNNAGQE (523 aa). One can recognise a CoA carboxyltransferase C-terminal domain in the interval 321-570; sequence AVEEPRYDAE…KAALNNAGQE (250 aa). The tract at residues 355 to 388 is acyl-CoA binding; it reads DGSRFTEFKKLYGETLVCGFAKLYGHTVGIVGNN.

It belongs to the AccD/PCCB family. In terms of tissue distribution, expressed in third instar larval ring gland (lateral and medial secretory cells and corpus cardiacum cells) and CNS.

It is found in the mitochondrion matrix. It carries out the reaction 3-methylbut-2-enoyl-CoA + hydrogencarbonate + ATP = 3-methyl-(2E)-glutaconyl-CoA + ADP + phosphate + H(+). It functions in the pathway amino-acid degradation; L-leucine degradation; (S)-3-hydroxy-3-methylglutaryl-CoA from 3-isovaleryl-CoA: step 2/3. Functionally, carboxyltransferase subunit of the 3-methylcrotonyl-CoA carboxylase, an enzyme that catalyzes the conversion of 3-methylcrotonyl-CoA to 3-methylglutaconyl-CoA, a critical step for leucine and isovaleric acid catabolism. Vital for adult survival. The polypeptide is Probable methylcrotonoyl-CoA carboxylase beta chain, mitochondrial (Drosophila melanogaster (Fruit fly)).